The sequence spans 216 residues: Endoplasmic reticulum vesicle protein 25 (216 aa).

The signal sequence occupies residues methionine 1 to alanine 21. Residues leucine 22–lysine 184 lie on the Lumenal side of the membrane. A GOLD domain is found at proline 34–arginine 150. A helical membrane pass occupies residues asparagine 185 to leucine 205. Residues arginine 206–proline 216 lie on the Cytoplasmic side of the membrane.

The protein belongs to the EMP24/GP25L family.

The protein localises to the endoplasmic reticulum membrane. It is found in the golgi apparatus membrane. Its function is as follows. Constituent of COPII-coated endoplasmic reticulum-derived transport vesicles. Required for efficient transport of a subset of secretory proteins to the Golgi. Facilitates retrograde transport from the Golgi to the endoplasmic reticulum. The chain is Endoplasmic reticulum vesicle protein 25 (erv25) from Schizosaccharomyces pombe (strain 972 / ATCC 24843) (Fission yeast).